The sequence spans 164 residues: Phosphopantetheine adenylyltransferase (164 aa).

Thr10 serves as a coordination point for substrate. ATP contacts are provided by residues 10-11 and His18; that span reads TF. The substrate site is built by Lys42, Leu74, and Arg88. ATP is bound by residues 89-91, Glu99, and 124-130; these read GIR and NSFISST.

Belongs to the bacterial CoaD family. Homohexamer. The cofactor is Mg(2+).

It localises to the cytoplasm. It carries out the reaction (R)-4'-phosphopantetheine + ATP + H(+) = 3'-dephospho-CoA + diphosphate. It participates in cofactor biosynthesis; coenzyme A biosynthesis; CoA from (R)-pantothenate: step 4/5. In terms of biological role, reversibly transfers an adenylyl group from ATP to 4'-phosphopantetheine, yielding dephospho-CoA (dPCoA) and pyrophosphate. This chain is Phosphopantetheine adenylyltransferase, found in Pseudoalteromonas translucida (strain TAC 125).